Consider the following 248-residue polypeptide: DnaA regulatory inactivator Hda (248 aa).

Belongs to the DnaA family. HdA subfamily. The active form seems to be an ADP-bound monomer. Forms the RIDA complex (regulatory inactivation of DnaA) of ATP-DnaA, ADP-Hda and the DNA-loaded beta sliding clamp (dnaN).

Its function is as follows. Mediates the interaction of DNA replication initiator protein DnaA with DNA polymerase subunit beta sliding clamp (dnaN). Stimulates hydrolysis of ATP-DnaA to ADP-DnaA, rendering DnaA inactive for reinitiation, a process called regulatory inhibition of DnaA or RIDA. This Proteus mirabilis (strain HI4320) protein is DnaA regulatory inactivator Hda.